Reading from the N-terminus, the 627-residue chain is DNA mismatch repair protein MutL (627 aa).

Residues 376 to 404 are disordered; it reads APASTNEVREGSAARAGNYQPPEPPSREA.

Belongs to the DNA mismatch repair MutL/HexB family.

This protein is involved in the repair of mismatches in DNA. It is required for dam-dependent methyl-directed DNA mismatch repair. May act as a 'molecular matchmaker', a protein that promotes the formation of a stable complex between two or more DNA-binding proteins in an ATP-dependent manner without itself being part of a final effector complex. The chain is DNA mismatch repair protein MutL from Aeromonas salmonicida (strain A449).